A 195-amino-acid chain; its full sequence is Imidazoleglycerol-phosphate dehydratase (195 aa).

Belongs to the imidazoleglycerol-phosphate dehydratase family.

The protein localises to the cytoplasm. The enzyme catalyses D-erythro-1-(imidazol-4-yl)glycerol 3-phosphate = 3-(imidazol-4-yl)-2-oxopropyl phosphate + H2O. Its pathway is amino-acid biosynthesis; L-histidine biosynthesis; L-histidine from 5-phospho-alpha-D-ribose 1-diphosphate: step 6/9. This chain is Imidazoleglycerol-phosphate dehydratase, found in Burkholderia ambifaria (strain MC40-6).